The chain runs to 399 residues: UDP-N-acetylglucosamine--N-acetylmuramyl-(pentapeptide) pyrophosphoryl-undecaprenol N-acetylglucosamine transferase (399 aa).

Residues 1–21 show a composition bias toward basic residues; it reads MTSRFGHSHHPRRGRSARARA. A disordered region spans residues 1-30; it reads MTSRFGHSHHPRRGRSARARAGRREGVQSN. UDP-N-acetyl-alpha-D-glucosamine contacts are provided by residues 58-60, Asn-170, Arg-206, Ser-234, Ile-288, and Gln-333; that span reads TGG.

This sequence belongs to the glycosyltransferase 28 family. MurG subfamily.

The protein localises to the cell inner membrane. It catalyses the reaction di-trans,octa-cis-undecaprenyl diphospho-N-acetyl-alpha-D-muramoyl-L-alanyl-D-glutamyl-meso-2,6-diaminopimeloyl-D-alanyl-D-alanine + UDP-N-acetyl-alpha-D-glucosamine = di-trans,octa-cis-undecaprenyl diphospho-[N-acetyl-alpha-D-glucosaminyl-(1-&gt;4)]-N-acetyl-alpha-D-muramoyl-L-alanyl-D-glutamyl-meso-2,6-diaminopimeloyl-D-alanyl-D-alanine + UDP + H(+). The protein operates within cell wall biogenesis; peptidoglycan biosynthesis. Its function is as follows. Cell wall formation. Catalyzes the transfer of a GlcNAc subunit on undecaprenyl-pyrophosphoryl-MurNAc-pentapeptide (lipid intermediate I) to form undecaprenyl-pyrophosphoryl-MurNAc-(pentapeptide)GlcNAc (lipid intermediate II). This chain is UDP-N-acetylglucosamine--N-acetylmuramyl-(pentapeptide) pyrophosphoryl-undecaprenol N-acetylglucosamine transferase, found in Acidovorax ebreus (strain TPSY) (Diaphorobacter sp. (strain TPSY)).